A 73-amino-acid chain; its full sequence is Mu-conotoxin PIIIA (73 aa).

An N-terminal signal peptide occupies residues 1 to 19; it reads MSKLGVLLTICLLLFPITA. Residues 20-49 constitute a propeptide that is removed on maturation; sequence LPMDGDQPADRLAERMQDNISSEEHPFEKR. The residue at position 50 (Gln-50) is a Pyrrolidone carboxylic acid. 6 cysteine pairs are disulfide-bonded: Cys-53/Cys-65, Cys-53/Cys-70, Cys-54/Cys-70, Cys-54/Cys-71, Cys-60/Cys-65, and Cys-60/Cys-71. Pro-57 is subject to 4-hydroxyproline. Pro-67 is subject to 4-hydroxyproline. Residue Cys-71 is modified to Cysteine amide.

It belongs to the conotoxin M superfamily. In terms of processing, 3D-structure of 3 disulfide-bond connectivities isomers is described (PIIIA-1 (C1-C5, C2-C6, C3-C4), PIIIA-2 (C1-C4, C2-C5, C3-C6) and PIIIA-3 (C1-C2, C3-C4, C5-C6)). Only PIIIA-2 contains the cysteine connectivity described as typical for native mu-conotoxins. However, PIIIA-1 is more potent than PIIIA-2, suggesting another possible disulfid connectivity. For this reason, both connectivities have been indicated in features. Expressed by the venom duct.

The protein localises to the secreted. Mu-conotoxins block voltage-gated sodium channels (Nav). This toxin potently blocks rNav1.4/SCN4A (IC(50)=36-41 nM). It also moderately blocks rNav1.1/SCN1A (IC(50)=120 nM), rNav1.2/SCN2A (IC(50)=620 nM), rNav1.3/SCN3A (IC(50)=3.2 uM), mNav1.6/SCN8A (IC(50)=100 nM). This inhibition is reversible. The block of Nav1.1, Nav1.2, and Nav1.6 is modified when beta-subunits are coexpressed with alpha subunits. Hence, blocks of channels containing the beta-1 and beta-3 subunits are more potent (compared to channels without beta subunits), whereas blocks of channels containing the beta-2 and beta-4 are less potent (compared to channels without beta subunits). In vivo, this peptide causes flaccid paralysis in both mice and fish. This is Mu-conotoxin PIIIA from Conus purpurascens (Purple cone).